The sequence spans 182 residues: MNDKINHLIKITGWFTVIFFLLLIIVSCTVWQIGWIDIISYTVTISTFITIGYERFMWKWKLFRIFNKQADISGDYEATLRYFYGESGIKKVSVEIKQTFLTVNIELRSDEITSNSITADIIEEHGKNILYYTYITNPKAEFEKKNPINRGTTRLIVGENELTGKYWTGAETTGDLRLKKLK.

2 helical membrane passes run 11–31 (ITGW…CTVW) and 33–53 (IGWI…TIGY).

It belongs to the CBASS Cap15 membrane effector family. The beta barrel domain oligomerizes; in the presence of cyclic nucleotides (probably 3',2'-cGAMP) higher-level oligomers occur.

It is found in the cell membrane. In terms of biological role, effector protein of a CBASS antivirus system. CBASS (cyclic oligonucleotide-based antiphage signaling system) provides immunity against bacteriophage. The CD-NTase protein (CdnE) synthesizes cyclic nucleotides in response to infection; these serve as specific second messenger signals. The signals activate a diverse range of effectors, leading to bacterial cell death and thus abortive phage infection. This system triggers membrane disruption without lysis. A type I-B CBASS system. Binds cyclic nucleotide second messenger 3',2'-cGAMP, probably oligomerizing, and induces cell membrane shrinkage and rupture, leading to cell death. Functionally, protects S.aureus against phage infection. When the CBASS operon (cdnE-cap15) is introduced in S.aureus strain RN4220 there is strong protection against lytic DNA phages 80alpha-vir and phi-NM1-gamma-6 but little to no protection against phages phi-NM4-gamma-4 or phi-12-gamma-3. This Staphylococcus schleiferi protein is CD-NTase-associated protein 15.